The sequence spans 348 residues: Eukaryotic translation initiation factor 3 subunit F (348 aa).

Residues 30–166 (VVIQPQAIFS…TRTYISAPVG (137 aa)) enclose the MPN domain. Residues 312–327 (STAIGGTGAESGGQRG) show a composition bias toward gly residues. The disordered stretch occupies residues 312 to 348 (STAIGGTGAESGGQRGGQRNNRQRGGQQRNQAEELRA). A compositionally biased stretch (low complexity) spans 328-341 (GQRNNRQRGGQQRN).

It belongs to the eIF-3 subunit F family. In terms of assembly, component of the eukaryotic translation initiation factor 3 (eIF-3) complex.

It is found in the cytoplasm. Its function is as follows. Component of the eukaryotic translation initiation factor 3 (eIF-3) complex, which is involved in protein synthesis of a specialized repertoire of mRNAs and, together with other initiation factors, stimulates binding of mRNA and methionyl-tRNAi to the 40S ribosome. The eIF-3 complex specifically targets and initiates translation of a subset of mRNAs involved in cell proliferation. The sequence is that of Eukaryotic translation initiation factor 3 subunit F from Coccidioides immitis (strain RS) (Valley fever fungus).